The following is a 190-amino-acid chain: Isopentenyl-diphosphate Delta-isomerase (190 aa).

Mn(2+) is bound by residues His27 and His34. One can recognise a Nudix hydrolase domain in the interval 32 to 171 (PLHFAFSSYI…PFVFSPWMVD (140 aa)). Residue Cys69 is part of the active site. Residue Cys69 participates in Mg(2+) binding. His71 is a Mn(2+) binding site. Residue Glu89 coordinates Mg(2+). 2 residues coordinate Mn(2+): Glu119 and Glu121. Residue Glu121 is part of the active site.

The protein belongs to the IPP isomerase type 1 family. The cofactor is Mg(2+). It depends on Mn(2+) as a cofactor.

Its subcellular location is the cytoplasm. It catalyses the reaction isopentenyl diphosphate = dimethylallyl diphosphate. It participates in isoprenoid biosynthesis; dimethylallyl diphosphate biosynthesis; dimethylallyl diphosphate from isopentenyl diphosphate: step 1/1. Catalyzes the 1,3-allylic rearrangement of the homoallylic substrate isopentenyl (IPP) to its highly electrophilic allylic isomer, dimethylallyl diphosphate (DMAPP). The sequence is that of Isopentenyl-diphosphate Delta-isomerase from Corynebacterium efficiens (strain DSM 44549 / YS-314 / AJ 12310 / JCM 11189 / NBRC 100395).